A 399-amino-acid polypeptide reads, in one-letter code: Tryptophan synthase beta chain (399 aa).

Lys-92 is modified (N6-(pyridoxal phosphate)lysine).

Belongs to the TrpB family. Tetramer of two alpha and two beta chains. Pyridoxal 5'-phosphate serves as cofactor.

The catalysed reaction is (1S,2R)-1-C-(indol-3-yl)glycerol 3-phosphate + L-serine = D-glyceraldehyde 3-phosphate + L-tryptophan + H2O. Its pathway is amino-acid biosynthesis; L-tryptophan biosynthesis; L-tryptophan from chorismate: step 5/5. Functionally, the beta subunit is responsible for the synthesis of L-tryptophan from indole and L-serine. The polypeptide is Tryptophan synthase beta chain (Legionella pneumophila subsp. pneumophila (strain Philadelphia 1 / ATCC 33152 / DSM 7513)).